We begin with the raw amino-acid sequence, 250 residues long: Beta-crystallin B1 (250 aa).

A disordered region spans residues 1–47 (MSQVAKAAATTAVNPGPDGKGKGTPSTGTAPAPGPTPVPASVPRPAA). Serine 2 is subject to N-acetylserine. An N-terminal arm region spans residues 2 to 56 (SQVAKAAATTAVNPGPDGKGKGTPSTGTAPAPGPTPVPASVPRPAAKVGELPPGS). Over residues 32–42 (APGPTPVPASV) the composition is skewed to pro residues. Beta/gamma crystallin 'Greek key' domains are found at residues 57–96 (YRLV…IVLS) and 97–141 (GPWV…RPIR). Positions 142-146 (MDSQE) are connecting peptide. 2 consecutive Beta/gamma crystallin 'Greek key' domains span residues 147–188 (HKIC…TVSS) and 189–231 (GTWV…RRLR). The C-terminal arm stretch occupies residues 233–250 (RQWHQEGCFPVLTAEPPK).

It belongs to the beta/gamma-crystallin family. Homo/heterodimer, or complexes of higher-order. The structure of beta-crystallin oligomers seems to be stabilized through interactions between the N-terminal arms. Specific cleavages in the N-terminal arm occur during lens maturation and give rise to truncated forms, leading to impaired oligomerization and protein insolubilization. The protease responsible for this partial degradation could be calpain II.

Its function is as follows. Crystallins are the dominant structural components of the vertebrate eye lens. The sequence is that of Beta-crystallin B1 (Crybb1) from Rattus norvegicus (Rat).